The following is a 285-amino-acid chain: Short chain dehydrogenase sol3 (285 aa).

Positions 39, 64, and 87 each coordinate NADP(+). Residues S168 and Y200 each act as proton donor in the active site. NADP(+)-binding residues include Y200, K204, and S234. The active-site Lowers pKa of active site Tyr is the K204.

It belongs to the short-chain dehydrogenases/reductases (SDR) family.

It functions in the pathway phytotoxin biosynthesis. Short chain dehydrogenase; part of the gene cluster that mediates the biosynthesis of the phytotoxin solanapyrone, a causal agent of early blight disease of potato and tomato. The prosolanapyrone synthase sol1 is a polyketide synthase that produces the octaketide desmethylprosolanapyrone I via sequential condensations of 7 malonyl-CoA units with one acetyl-CoA unit, and one methylation step. The octaketide backbone is further methylated by the sol2 O-methyltransferase to yield prosolanapyrone I. Prosolanapyrone I is hydroxylated to prosolanapyrone II by the cytochrome P450 monooxygenase sol6. The solanapyrone synthase sol5 then catalyzes the oxidation of prosolanapyrone II and the subsequent Diels Alder cycloisomerization of the product prosolanapyrone III to solanapyrones A and D. Solanapyrones A and D are then converted into solanapyrones B and E, respectively, by the sol3 dehydrogenase. This chain is Short chain dehydrogenase sol3 (sol3), found in Alternaria solani.